Reading from the N-terminus, the 313-residue chain is Ribosomal RNA small subunit methyltransferase H (313 aa).

Residues A33–H35, E52, F80, D101, and Q108 each bind S-adenosyl-L-methionine.

This sequence belongs to the methyltransferase superfamily. RsmH family.

Its subcellular location is the cytoplasm. It catalyses the reaction cytidine(1402) in 16S rRNA + S-adenosyl-L-methionine = N(4)-methylcytidine(1402) in 16S rRNA + S-adenosyl-L-homocysteine + H(+). Specifically methylates the N4 position of cytidine in position 1402 (C1402) of 16S rRNA. The polypeptide is Ribosomal RNA small subunit methyltransferase H (Spiroplasma kunkelii).